The primary structure comprises 353 residues: B1 bradykinin receptor (353 aa).

The Extracellular portion of the chain corresponds to 1–41; sequence MASQTLVVFQASNQSQLPPPNATLCDGAQEAWHLLHKVLPT. N-linked (GlcNAc...) asparagine glycans are attached at residues Asn13 and Asn21. Residues 42 to 62 traverse the membrane as a helical segment; that stretch reads CVVAICSGGLLGNLFVLSVFL. The Cytoplasmic portion of the chain corresponds to 63-72; the sequence is VPRRRLNAAE. A helical transmembrane segment spans residues 73 to 93; sequence IYLAHLAASDLVFALGLPFWA. The Extracellular portion of the chain corresponds to 94–110; sequence ETIRNGFHWPFGAPLCR. Cys109 and Cys189 form a disulfide bridge. Residues 111–131 form a helical membrane-spanning segment; the sequence is VVNGVIKANLFISIFLVVAIS. The Cytoplasmic segment spans residues 132 to 154; the sequence is RDRYRALVHPVASWRRRRRRHWA. A helical transmembrane segment spans residues 155–175; sequence QATCVLIWTAGGLLSIPTFLL. Residues 176 to 207 lie on the Extracellular side of the membrane; it reads RSVQVVPELNVSACVLPFPHEAWAFVRTVELN. Asn185 is a glycosylation site (N-linked (GlcNAc...) asparagine). A helical membrane pass occupies residues 208 to 228; sequence VLGFLLPLAAILFFNYHILAA. Over 229-251 the chain is Cytoplasmic; the sequence is LRGREQLSRTRCGGPRDGKTTAL. A helical membrane pass occupies residues 252 to 272; the sequence is ILTLVAVFLLCWTPYHVCAFL. Topologically, residues 273-295 are extracellular; sequence EFLLHVRAIRGCFWEDFTDLGLQ. The helical transmembrane segment at 296–316 threads the bilayer; sequence YTNFFAFINSCLNPVIYVFWG. The Cytoplasmic segment spans residues 317–353; sequence QLFRTKIWELYHRCLPRKLTAVSSSRRKEIFQIFWRN. Cys330 carries the S-palmitoyl cysteine lipid modification.

This sequence belongs to the G-protein coupled receptor 1 family. Bradykinin receptor subfamily. BDKRB1 sub-subfamily.

It localises to the cell membrane. Its function is as follows. This is a receptor for bradykinin. Could be a factor in chronic pain and inflammation. The chain is B1 bradykinin receptor (BDKRB1) from Sus scrofa (Pig).